We begin with the raw amino-acid sequence, 367 residues long: tRNA-specific 2-thiouridylase MnmA (367 aa).

Residues 12–19 (GMSGGVDS) and M38 each bind ATP. The interaction with target base in tRNA stretch occupies residues 98–100 (NPD). The active-site Nucleophile is the C103. C103 and C200 are joined by a disulfide. G128 provides a ligand contact to ATP. The segment at 150–152 (KDQ) is interaction with tRNA. Residue C200 is the Cysteine persulfide intermediate of the active site. Residues 312 to 313 (RY) form an interaction with tRNA region.

This sequence belongs to the MnmA/TRMU family.

It is found in the cytoplasm. It catalyses the reaction S-sulfanyl-L-cysteinyl-[protein] + uridine(34) in tRNA + AH2 + ATP = 2-thiouridine(34) in tRNA + L-cysteinyl-[protein] + A + AMP + diphosphate + H(+). Functionally, catalyzes the 2-thiolation of uridine at the wobble position (U34) of tRNA, leading to the formation of s(2)U34. This is tRNA-specific 2-thiouridylase MnmA from Psychromonas ingrahamii (strain DSM 17664 / CCUG 51855 / 37).